Consider the following 170-residue polypeptide: uncharacterized protein (170 aa).

The region spanning Leu-8–Glu-167 is the N-acetyltransferase domain.

This sequence belongs to the acetyltransferase family.

This is an uncharacterized protein from Bacillus subtilis (strain 168).